The primary structure comprises 198 residues: Protein GrpE (198 aa).

A disordered region spans residues 1–56; the sequence is MVEKKKSQAEKNNQSATEEEIEKAVKGSKRDSNAADEKNSASAAASSSAVSDAEPA. The segment covering 22–39 has biased composition (basic and acidic residues); that stretch reads EKAVKGSKRDSNAADEKN. A compositionally biased stretch (low complexity) spans 40–56; that stretch reads SASAAASSSAVSDAEPA.

This sequence belongs to the GrpE family. As to quaternary structure, homodimer.

Its subcellular location is the cytoplasm. Functionally, participates actively in the response to hyperosmotic and heat shock by preventing the aggregation of stress-denatured proteins, in association with DnaK and GrpE. It is the nucleotide exchange factor for DnaK and may function as a thermosensor. Unfolded proteins bind initially to DnaJ; upon interaction with the DnaJ-bound protein, DnaK hydrolyzes its bound ATP, resulting in the formation of a stable complex. GrpE releases ADP from DnaK; ATP binding to DnaK triggers the release of the substrate protein, thus completing the reaction cycle. Several rounds of ATP-dependent interactions between DnaJ, DnaK and GrpE are required for fully efficient folding. The sequence is that of Protein GrpE from Oenococcus oeni (strain ATCC BAA-331 / PSU-1).